Reading from the N-terminus, the 174-residue chain is Large ribosomal subunit protein uL10 (174 aa).

This sequence belongs to the universal ribosomal protein uL10 family. Part of the ribosomal stalk of the 50S ribosomal subunit. The N-terminus interacts with L11 and the large rRNA to form the base of the stalk. The C-terminus forms an elongated spine to which L12 dimers bind in a sequential fashion forming a multimeric L10(L12)X complex.

In terms of biological role, forms part of the ribosomal stalk, playing a central role in the interaction of the ribosome with GTP-bound translation factors. The protein is Large ribosomal subunit protein uL10 of Methylibium petroleiphilum (strain ATCC BAA-1232 / LMG 22953 / PM1).